Consider the following 473-residue polypeptide: MKSTQSFSAVAGFVRLPKSSLGQVRYYSILKDMSIPASKQKFIPSSGTYPKGFLVAGAHAGVKESNTRFPDVALICSETPCSAAAVFTANKFQAAPVQVSKQVLETRQGTGIRGVVVNSGCANAVTGKGGLEDAKMMSAKVDECTGTPSADPQNTSTLVMSTGVIGQRLPIKKILDTIPTAHSNLASNHSAWLTAARAICTTDTFPKLLSRTFTLPSSPNRAYHLAGMTKGAGMIHPNMATLLGILCTDVPISPSVLNPLLTHAVSRSFNSISIDGDTSTNDTVALLANGAAGGETITTTSSPDYTAMQTILTNFAQSLAQLVVRDGEGATKFVTVRVRNSPSHADAKVIASTIARSPLVKTALYGKDANWGRILCAIGYSQGIAEGTVVPERTSVSFKPVDGSEELKLLVNGEPEAVDEERAARILQDEDLEIVVDLGGGEKGDKGLGGEEGVYWFCDFSHEYVTINGDYRT.

Threonine 201, lysine 230, threonine 241, glutamate 328, asparagine 468, and threonine 473 together coordinate substrate. The active-site Nucleophile is the threonine 241.

This sequence belongs to the ArgJ family. In terms of assembly, heterodimer of an alpha and a beta chain. Post-translationally, the alpha and beta chains are autoproteolytically processed from a single precursor protein within the mitochondrion.

The protein resides in the mitochondrion matrix. It catalyses the reaction N(2)-acetyl-L-ornithine + L-glutamate = N-acetyl-L-glutamate + L-ornithine. It carries out the reaction L-glutamate + acetyl-CoA = N-acetyl-L-glutamate + CoA + H(+). It participates in amino-acid biosynthesis; L-arginine biosynthesis; L-ornithine and N-acetyl-L-glutamate from L-glutamate and N(2)-acetyl-L-ornithine (cyclic): step 1/1. The protein operates within amino-acid biosynthesis; L-arginine biosynthesis; N(2)-acetyl-L-ornithine from L-glutamate: step 1/4. In terms of biological role, catalyzes two activities which are involved in the cyclic version of arginine biosynthesis: the synthesis of acetylglutamate from glutamate and acetyl-CoA, and of ornithine by transacetylation between acetylornithine and glutamate. The chain is Arginine biosynthesis bifunctional protein ArgJ, mitochondrial from Blastomyces gilchristii (strain SLH14081) (Blastomyces dermatitidis).